The following is a 158-amino-acid chain: Eukaryotic translation initiation factor 5A-1 (158 aa).

Residues 1–10 (MSDEEHHFES) show a composition bias toward basic and acidic residues. Positions 1 to 21 (MSDEEHHFESSDAGASKTYPQ) are disordered. Ser2 is subject to Phosphoserine. Lys51 carries the post-translational modification Hypusine.

Belongs to the eIF-5A family. Post-translationally, lys-51 undergoes hypusination, a unique post-translational modification that consists in the addition of a butylamino group from spermidine to lysine side chain, leading to the formation of the unusual amino acid hypusine. eIF-5As are the only known proteins to undergo this modification, which is essential for their function. Expressed in leaf vasculature and inflorescence stems. Present in xylem tissue but not in phloem, and in developing vessel members, but not in mature vessels members. Detected in anthers.

Translation factor that promotes translation elongation and termination, particularly upon ribosome stalling at specific amino acid sequence contexts. Binds between the exit (E) and peptidyl (P) site of the ribosome and promotes rescue of stalled ribosome: specifically required for efficient translation of polyproline-containing peptides as well as other motifs that stall the ribosome. Acts as a ribosome quality control (RQC) cofactor by joining the RQC complex to facilitate peptidyl transfer during CAT tailing step. Involved in xylogenesis. In Arabidopsis thaliana (Mouse-ear cress), this protein is Eukaryotic translation initiation factor 5A-1 (ELF5A-1).